The sequence spans 814 residues: Phenylalanine--tRNA ligase beta subunit (814 aa).

The 115-residue stretch at 39 to 153 folds into the tRNA-binding domain; that stretch reads SKNVNGVVLG…LKHELGTPVS (115 aa). One can recognise a B5 domain in the interval 414 to 500; sequence NEDIFIKLRR…RLIGYDRFDL (87 aa). Residues Asp478, Asp484, Glu487, and Glu488 each coordinate Mg(2+). Residues 720–813 form the FDX-ACB domain; that stretch reads PIVPKIERDI…IEKSFQTKLR (94 aa).

It belongs to the phenylalanyl-tRNA synthetase beta subunit family. Type 1 subfamily. Tetramer of two alpha and two beta subunits. Mg(2+) serves as cofactor.

The protein resides in the cytoplasm. It carries out the reaction tRNA(Phe) + L-phenylalanine + ATP = L-phenylalanyl-tRNA(Phe) + AMP + diphosphate + H(+). This Prochlorococcus marinus (strain MIT 9312) protein is Phenylalanine--tRNA ligase beta subunit.